A 469-amino-acid polypeptide reads, in one-letter code: Threonine synthase (469 aa).

Lys112 carries the N6-(pyridoxal phosphate)lysine modification.

The protein belongs to the threonine synthase family. Pyridoxal 5'-phosphate is required as a cofactor.

It catalyses the reaction O-phospho-L-homoserine + H2O = L-threonine + phosphate. It functions in the pathway amino-acid biosynthesis; L-threonine biosynthesis; L-threonine from L-aspartate: step 5/5. Its function is as follows. Catalyzes the gamma-elimination of phosphate from L-phosphohomoserine and the beta-addition of water to produce L-threonine. The chain is Threonine synthase (thrC) from Pseudomonas aeruginosa (strain ATCC 15692 / DSM 22644 / CIP 104116 / JCM 14847 / LMG 12228 / 1C / PRS 101 / PAO1).